Reading from the N-terminus, the 382-residue chain is Small ribosomal subunit protein bS1 homolog (382 aa).

S1 motif domains follow at residues Gly16–Arg84, Lys102–Arg167, Gly188–Lys256, and Gly273–Arg342. Residue Ser243 is modified to Phosphoserine.

This sequence belongs to the bacterial ribosomal protein bS1 family.

Its function is as follows. Plays a role in sporulation. Cannot be expressed in wild-type E.coli, does not complement an E.coli rpsA deletion. The chain is Small ribosomal subunit protein bS1 homolog from Bacillus subtilis (strain 168).